Reading from the N-terminus, the 548-residue chain is mRNA cleavage and polyadenylation factor CLP1 (548 aa).

ATP is bound by residues glutamate 19, lysine 60, and 123 to 128 (SSGKTT). A compositionally biased stretch (basic and acidic residues) spans 437 to 481 (ESEVKEEVKEEKNEKDGEIKQDGEGEKKGEGKGEGEGEGEGKYGE). The segment at 437–500 (ESEVKEEVKE…DEEEVPFREE (64 aa)) is disordered. Over residues 482 to 494 (EEGEAEGEDDEEE) the composition is skewed to acidic residues.

This sequence belongs to the Clp1 family. Clp1 subfamily. In terms of assembly, component of a pre-mRNA cleavage factor complex. Interacts directly with PCF11.

The protein localises to the nucleus. In terms of biological role, required for endonucleolytic cleavage during polyadenylation-dependent pre-mRNA 3'-end formation. The chain is mRNA cleavage and polyadenylation factor CLP1 from Cryptococcus neoformans var. neoformans serotype D (strain B-3501A) (Filobasidiella neoformans).